Consider the following 314-residue polypeptide: Caspase-like protein (314 aa).

Belongs to the peptidase C14A family.

May be involved in viral replication. This is Caspase-like protein from Heliothis virescens ascovirus 3e (HvAV-3e).